Consider the following 248-residue polypeptide: NAD(P)H-quinone oxidoreductase subunit K (248 aa).

[4Fe-4S] cluster is bound by residues C66, C67, C131, and C162.

Belongs to the complex I 20 kDa subunit family. NDH-1 can be composed of about 15 different subunits; different subcomplexes with different compositions have been identified which probably have different functions. [4Fe-4S] cluster is required as a cofactor.

The protein resides in the cellular thylakoid membrane. It carries out the reaction a plastoquinone + NADH + (n+1) H(+)(in) = a plastoquinol + NAD(+) + n H(+)(out). The enzyme catalyses a plastoquinone + NADPH + (n+1) H(+)(in) = a plastoquinol + NADP(+) + n H(+)(out). Functionally, NDH-1 shuttles electrons from an unknown electron donor, via FMN and iron-sulfur (Fe-S) centers, to quinones in the respiratory and/or the photosynthetic chain. The immediate electron acceptor for the enzyme in this species is believed to be plastoquinone. Couples the redox reaction to proton translocation, and thus conserves the redox energy in a proton gradient. Cyanobacterial NDH-1 also plays a role in inorganic carbon-concentration. The protein is NAD(P)H-quinone oxidoreductase subunit K of Synechococcus sp. (strain WH7803).